The chain runs to 933 residues: Bifunctional uridylyltransferase/uridylyl-removing enzyme (933 aa).

Positions 1 to 379 are uridylyltransferase; sequence MAKISLKLDE…TFQRRKRKLA (379 aa). The interval 380–736 is uridylyl-removing; that stretch reads GTSDFIVDNH…VKTHQFEAVT (357 aa). The region spanning 496–619 is the HD domain; that stretch reads VDEHLIRCIG…VQSVERLKLL (124 aa). ACT domains follow at residues 737 to 818 and 848 to 922; these read EITV…EMIE and VIEV…GIAP.

It belongs to the GlnD family. It depends on Mg(2+) as a cofactor.

It carries out the reaction [protein-PII]-L-tyrosine + UTP = [protein-PII]-uridylyl-L-tyrosine + diphosphate. The catalysed reaction is [protein-PII]-uridylyl-L-tyrosine + H2O = [protein-PII]-L-tyrosine + UMP + H(+). With respect to regulation, uridylyltransferase (UTase) activity is inhibited by glutamine, while glutamine activates uridylyl-removing (UR) activity. In terms of biological role, modifies, by uridylylation and deuridylylation, the PII regulatory proteins (GlnB and homologs), in response to the nitrogen status of the cell that GlnD senses through the glutamine level. Under low glutamine levels, catalyzes the conversion of the PII proteins and UTP to PII-UMP and PPi, while under higher glutamine levels, GlnD hydrolyzes PII-UMP to PII and UMP (deuridylylation). Thus, controls uridylylation state and activity of the PII proteins, and plays an important role in the regulation of nitrogen fixation and metabolism. This chain is Bifunctional uridylyltransferase/uridylyl-removing enzyme, found in Mesorhizobium japonicum (strain LMG 29417 / CECT 9101 / MAFF 303099) (Mesorhizobium loti (strain MAFF 303099)).